Consider the following 712-residue polypeptide: Cyclolysin secretion/processing ATP-binding protein CyaB (712 aa).

The 122-residue stretch at 7–128 (QCASVPDSGL…ALWAGELLLC (122 aa)) folds into the Peptidase C39 domain. The region spanning 157–439 (IGEVLLISLV…LAQLWNDFQQ (283 aa)) is the ABC transmembrane type-1 domain. 6 consecutive transmembrane segments (helical) span residues 160-180 (VLLISLVLQFIALLTPLFFQV), 194-214 (LNVIAVGFLAAILFEALLTGI), 272-292 (AVTVLLDVVFSVVFIAVMFFY), 298-318 (LVVLAALPCYFLLSLVLTPVL), 367-387 (VAAGLSVANVAMLANTGVTLI), and 390-410 (LVALGVLWVGATEVVAQRMTV). Residues 471 to 706 (IELDRVSFRY…GGLYARLQAL (236 aa)) form the ABC transporter domain. Residue 505 to 512 (GRSGSGKS) coordinates ATP.

Belongs to the ABC transporter superfamily. Cyclolysin exporter (TC 3.A.1.109.2) family.

Its subcellular location is the cell membrane. Its function is as follows. Involved in the export of calmodulin-sensitive adenylate cyclase-hemolysin (cyclolysin). This Bordetella pertussis (strain Tohama I / ATCC BAA-589 / NCTC 13251) protein is Cyclolysin secretion/processing ATP-binding protein CyaB (cyaB).